The primary structure comprises 237 residues: Phosphoribosylaminoimidazole-succinocarboxamide synthase (237 aa).

The protein belongs to the SAICAR synthetase family.

It carries out the reaction 5-amino-1-(5-phospho-D-ribosyl)imidazole-4-carboxylate + L-aspartate + ATP = (2S)-2-[5-amino-1-(5-phospho-beta-D-ribosyl)imidazole-4-carboxamido]succinate + ADP + phosphate + 2 H(+). The protein operates within purine metabolism; IMP biosynthesis via de novo pathway; 5-amino-1-(5-phospho-D-ribosyl)imidazole-4-carboxamide from 5-amino-1-(5-phospho-D-ribosyl)imidazole-4-carboxylate: step 1/2. This chain is Phosphoribosylaminoimidazole-succinocarboxamide synthase, found in Erwinia tasmaniensis (strain DSM 17950 / CFBP 7177 / CIP 109463 / NCPPB 4357 / Et1/99).